We begin with the raw amino-acid sequence, 271 residues long: Acetylglutamate kinase (271 aa).

Residues Gly-41–Gly-42, Arg-63, and Asn-166 each bind substrate.

It belongs to the acetylglutamate kinase family. ArgB subfamily.

Its subcellular location is the cytoplasm. It carries out the reaction N-acetyl-L-glutamate + ATP = N-acetyl-L-glutamyl 5-phosphate + ADP. It functions in the pathway amino-acid biosynthesis; L-arginine biosynthesis; N(2)-acetyl-L-ornithine from L-glutamate: step 2/4. Its function is as follows. Catalyzes the ATP-dependent phosphorylation of N-acetyl-L-glutamate. This Anaeromyxobacter sp. (strain Fw109-5) protein is Acetylglutamate kinase.